The primary structure comprises 363 residues: Flagellar P-ring protein (363 aa).

Residues 1–20 (MKKLTLVLFGMLFLASSAHA) form the signal peptide.

It belongs to the FlgI family. As to quaternary structure, the basal body constitutes a major portion of the flagellar organelle and consists of four rings (L,P,S, and M) mounted on a central rod.

It is found in the periplasm. The protein localises to the bacterial flagellum basal body. Functionally, assembles around the rod to form the L-ring and probably protects the motor/basal body from shearing forces during rotation. The chain is Flagellar P-ring protein from Vibrio atlanticus (strain LGP32) (Vibrio splendidus (strain Mel32)).